An 896-amino-acid polypeptide reads, in one-letter code: Translation initiation factor IF-2 (896 aa).

The interval 32 to 306 is disordered; sequence LAQAGSSDTK…HKTKKQSEEH (275 aa). 2 stretches are compositionally biased toward polar residues: residues 35–48 and 114–126; these read AGSSDTKNSPVSKA and ADSTEPLSNSSQE. Residues 156–170 are compositionally biased toward basic and acidic residues; the sequence is ARNEETPIIRTRTEP. The segment covering 213–237 has biased composition (polar residues); it reads QQTRPSVETASTKQQQPSGTNTRPA. Basic and acidic residues predominate over residues 256–280; sequence RGPDRDRTKRSDENVKAFTGRDRYG. Residues 401-570 enclose the tr-type G domain; it reads IRSPIVAFMG…ALQAEVLELK (170 aa). Residues 410-417 are G1; that stretch reads GHVDHGKT. GTP is bound at residue 410-417; the sequence is GHVDHGKT. Residues 435–439 are G2; that stretch reads AITQH. Residues 456–459 are G3; it reads DTPG. GTP is bound by residues 456-460 and 510-513; these read DTPGH and NKCD. The tract at residues 510 to 513 is G4; sequence NKCD. The tract at residues 546–548 is G5; sequence SAK.

Belongs to the TRAFAC class translation factor GTPase superfamily. Classic translation factor GTPase family. IF-2 subfamily.

It localises to the cytoplasm. Functionally, one of the essential components for the initiation of protein synthesis. Protects formylmethionyl-tRNA from spontaneous hydrolysis and promotes its binding to the 30S ribosomal subunits. Also involved in the hydrolysis of GTP during the formation of the 70S ribosomal complex. This is Translation initiation factor IF-2 (infB) from Chlamydia muridarum (strain MoPn / Nigg).